Reading from the N-terminus, the 211-residue chain is Small ribosomal subunit protein eS1 (211 aa).

The tract at residues 192 to 211 (NGLPPYEAVGDRATPELASY) is disordered.

The protein belongs to the eukaryotic ribosomal protein eS1 family.

This is Small ribosomal subunit protein eS1 from Methanopyrus kandleri (strain AV19 / DSM 6324 / JCM 9639 / NBRC 100938).